We begin with the raw amino-acid sequence, 335 residues long: Phosphate acyltransferase (335 aa).

Belongs to the PlsX family. In terms of assembly, homodimer. Probably interacts with PlsY.

It is found in the cytoplasm. The catalysed reaction is a fatty acyl-[ACP] + phosphate = an acyl phosphate + holo-[ACP]. It participates in lipid metabolism; phospholipid metabolism. Catalyzes the reversible formation of acyl-phosphate (acyl-PO(4)) from acyl-[acyl-carrier-protein] (acyl-ACP). This enzyme utilizes acyl-ACP as fatty acyl donor, but not acyl-CoA. The chain is Phosphate acyltransferase from Streptococcus pyogenes serotype M28 (strain MGAS6180).